Consider the following 432-residue polypeptide: UDP-N-acetylmuramate--L-alanine ligase (432 aa).

108 to 114 contacts ATP; it reads GAHGKTS.

This sequence belongs to the MurCDEF family.

It is found in the cytoplasm. It carries out the reaction UDP-N-acetyl-alpha-D-muramate + L-alanine + ATP = UDP-N-acetyl-alpha-D-muramoyl-L-alanine + ADP + phosphate + H(+). The protein operates within cell wall biogenesis; peptidoglycan biosynthesis. In terms of biological role, cell wall formation. The chain is UDP-N-acetylmuramate--L-alanine ligase from Bacillus pumilus (strain SAFR-032).